A 154-amino-acid chain; its full sequence is Protein FAM162A (154 aa).

The segment at R76–K102 is required for proapoptotic activity. A helical transmembrane segment spans residues I103–I120.

The protein belongs to the UPF0389 family. As to quaternary structure, interacts with HSP90AB1; HSP90AB1 is essential for FAM162A mitochondrial localization and pro-apoptotic activity. Interacts with VDAC2; the interaction is probably involved in inducing mitochondrial permeability transition.

The protein localises to the mitochondrion membrane. Its function is as follows. Proposed to be involved in regulation of apoptosis; the exact mechanism may differ between cell types/tissues. May be involved in hypoxia-induced cell death of transformed cells implicating cytochrome C release and caspase activation (such as CASP9) and inducing mitochondrial permeability transition. May be involved in hypoxia-induced cell death of neuronal cells probably by promoting release of AIFM1 from mitochondria to cytoplasm and its translocation to the nucleus; however, the involvement of caspases has been reported conflictingly. In Pongo abelii (Sumatran orangutan), this protein is Protein FAM162A (FAM162A).